Consider the following 540-residue polypeptide: Maintenance of mitochondrial morphology protein 1 (540 aa).

The Lumenal segment spans residues 1-25 (MAGPSNQTQPPPPVLTQPSLSFTQG). A helical membrane pass occupies residues 26 to 46 (LLVGQLSVVLLIGAFIKFFIF). Topologically, residues 47-540 (GEAPPHPSRN…GSMPDPVVVT (494 aa)) are cytoplasmic. Disordered regions lie at residues 52 to 135 (HPSR…SHQP), 275 to 331 (GPGT…ATAA), 416 to 471 (GRTG…GGSM), and 509 to 540 (YGGA…VVVT). Composition is skewed to polar residues over residues 69–81 (YSLN…SSPR), 88–105 (STSN…NTRS), and 112–121 (YSATPTNPTS). Residues 122 to 132 (KHSRSRPHHSS) are compositionally biased toward basic residues. One can recognise an SMP-LTD domain in the interval 134-409 (QPESLDWFNV…EPRVQVVGLP (276 aa)). Low complexity predominate over residues 321–331 (TNTNTAGATAA). Composition is skewed to gly residues over residues 442-471 (TAGG…GGSM) and 511-521 (GAQGGGGGGGR).

It belongs to the MMM1 family. Homodimer. Component of the ER-mitochondria encounter structure (ERMES) or MDM complex, composed of MMM1, MDM10, MDM12 and MDM34. An MMM1 homodimer associates with one molecule of MDM12 on each side in a pairwise head-to-tail manner, and the SMP-LTD domains of MMM1 and MDM12 generate a continuous hydrophobic tunnel for phospholipid trafficking.

It is found in the endoplasmic reticulum membrane. Functionally, component of the ERMES/MDM complex, which serves as a molecular tether to connect the endoplasmic reticulum (ER) and mitochondria. Components of this complex are involved in the control of mitochondrial shape and protein biogenesis, and function in nonvesicular lipid trafficking between the ER and mitochondria. The MDM12-MMM1 subcomplex functions in the major beta-barrel assembly pathway that is responsible for biogenesis of all outer membrane beta-barrel proteins, and acts in a late step after the SAM complex. The MDM10-MDM12-MMM1 subcomplex further acts in the TOM40-specific pathway after the action of the MDM12-MMM1 complex. Essential for establishing and maintaining the structure of mitochondria and maintenance of mtDNA nucleoids. In Blastomyces gilchristii (strain SLH14081) (Blastomyces dermatitidis), this protein is Maintenance of mitochondrial morphology protein 1.